The following is a 386-amino-acid chain: O-methyltransferase 10 (386 aa).

S-adenosyl-L-homocysteine is bound by residues Ser-207, Gly-231, Asp-254, Asp-274, and Lys-288. Asp-254 is a binding site for S-adenosyl-L-methionine. His-292 serves as the catalytic Proton acceptor.

It belongs to the class I-like SAM-binding methyltransferase superfamily. Cation-independent O-methyltransferase family. Homodimer.

It carries out the reaction dopamine + S-adenosyl-L-methionine = 4-methoxytyramine + S-adenosyl-L-homocysteine + H(+). It catalyses the reaction 3,4-dihydroxy-5-methoxyphenethylamine + S-adenosyl-L-methionine = 3-hydroxy-4,5-dimethoxyphenethylamine + S-adenosyl-L-homocysteine + H(+). The catalysed reaction is 3-hydroxy-4,5-dimethoxyphenethylamine + S-adenosyl-L-methionine = mescaline + S-adenosyl-L-homocysteine + H(+). The enzyme catalyses 4-hydroxy-3,5-dimethoxyphenethylamine + S-adenosyl-L-methionine = mescaline + S-adenosyl-L-homocysteine + H(+). It participates in aromatic compound metabolism. The protein operates within alkaloid biosynthesis. O-methyltransferase participating in the biosynthesis of natural products derived from phenylethylamine, including mescaline, a natural hallucinogen potentially used in psychotherapeutic treatments. Catalyzes the O-methylation of mescaline para hydroxyl groups, using dopamine, 3,4-dihydroxy-5-methoxyphenethylamine, 3-hydroxy-4,5-dimethoxyphenethylamine and 4-hydroxy-3,5-dimethoxyphenethylamine as substrates. The protein is O-methyltransferase 10 of Lophophora williamsii (Peyote).